A 56-amino-acid polypeptide reads, in one-letter code: MGHENIWYSHPRKYGPGSRYCRVCANHHGLIRKYGLNICRRCFRQYAADIGFKKLD.

Residues Cys-21, Cys-24, Cys-39, and Cys-42 each contribute to the Zn(2+) site.

Belongs to the universal ribosomal protein uS14 family. As to quaternary structure, component of the 40S small ribosomal subunit. The cofactor is Zn(2+).

The protein resides in the cytoplasm. It localises to the cytosol. It is found in the rough endoplasmic reticulum. The polypeptide is Small ribosomal subunit protein uS14 (RpS29) (Ixodes scapularis (Black-legged tick)).